The following is a 164-amino-acid chain: Ribosome maturation factor RimM (164 aa).

The PRC barrel domain maps to 90 to 161; that stretch reads KGSYFIADLI…TVTIKPLEIW (72 aa).

It belongs to the RimM family. In terms of assembly, binds ribosomal protein uS19.

The protein resides in the cytoplasm. Functionally, an accessory protein needed during the final step in the assembly of 30S ribosomal subunit, possibly for assembly of the head region. Essential for efficient processing of 16S rRNA. May be needed both before and after RbfA during the maturation of 16S rRNA. It has affinity for free ribosomal 30S subunits but not for 70S ribosomes. The protein is Ribosome maturation factor RimM of Clostridium botulinum (strain Hall / ATCC 3502 / NCTC 13319 / Type A).